The following is a 255-amino-acid chain: Membrane protein insertase YidC 2 (255 aa).

A signal peptide spans Met1–Gly20. A lipid anchor (N-palmitoyl cysteine) is attached at Cys21. Cys21 carries the S-diacylglycerol cysteine lipid modification. 5 consecutive transmembrane segments (helical) span residues Tyr59–Ile79, Leu129–Ile149, Phe160–Ile180, Met202–Leu222, and Ser223–Pro243.

It belongs to the OXA1/ALB3/YidC family. Type 2 subfamily.

The protein resides in the cell membrane. Functionally, required for the insertion and/or proper folding and/or complex formation of integral membrane proteins into the membrane. Involved in integration of membrane proteins that insert both dependently and independently of the Sec translocase complex, as well as at least some lipoproteins. This Bacillus anthracis protein is Membrane protein insertase YidC 2.